The chain runs to 212 residues: Ribonuclease HII (212 aa).

In terms of domain architecture, RNase H type-2 spans 19 to 212 (CIIVGVDEVG…SKISYMFKNS (194 aa)). The a divalent metal cation site is built by aspartate 25, glutamate 26, and aspartate 120.

It belongs to the RNase HII family. Mn(2+) serves as cofactor. Mg(2+) is required as a cofactor.

The protein resides in the cytoplasm. It carries out the reaction Endonucleolytic cleavage to 5'-phosphomonoester.. Endonuclease that specifically degrades the RNA of RNA-DNA hybrids. The polypeptide is Ribonuclease HII (Ehrlichia ruminantium (strain Welgevonden)).